Here is a 952-residue protein sequence, read N- to C-terminus: Isoleucine--tRNA ligase (952 aa).

The short motif at 60–70 (PYANGSLHIGH) is the 'HIGH' region element. Position 562 (Glu562) interacts with L-isoleucyl-5'-AMP. The 'KMSKS' region motif lies at 603 to 607 (KMSKS). Lys606 is a binding site for ATP. Residues Cys921, Cys924, Cys941, and Cys944 each contribute to the Zn(2+) site.

It belongs to the class-I aminoacyl-tRNA synthetase family. IleS type 1 subfamily. Monomer. Requires Zn(2+) as cofactor.

It is found in the cytoplasm. The enzyme catalyses tRNA(Ile) + L-isoleucine + ATP = L-isoleucyl-tRNA(Ile) + AMP + diphosphate. Catalyzes the attachment of isoleucine to tRNA(Ile). As IleRS can inadvertently accommodate and process structurally similar amino acids such as valine, to avoid such errors it has two additional distinct tRNA(Ile)-dependent editing activities. One activity is designated as 'pretransfer' editing and involves the hydrolysis of activated Val-AMP. The other activity is designated 'posttransfer' editing and involves deacylation of mischarged Val-tRNA(Ile). This is Isoleucine--tRNA ligase from Microcystis aeruginosa (strain NIES-843 / IAM M-2473).